Reading from the N-terminus, the 141-residue chain is Universal stress protein A homolog (141 aa).

The protein belongs to the universal stress protein A family. In terms of assembly, homodimer.

It localises to the cytoplasm. Functionally, required for resistance to DNA-damaging agents. This is Universal stress protein A homolog (uspA) from Haemophilus ducreyi (strain 35000HP / ATCC 700724).